Reading from the N-terminus, the 175-residue chain is Protein-export protein SecB (175 aa).

Positions glutamine 154 to glutamine 175 are disordered.

It belongs to the SecB family. In terms of assembly, homotetramer, a dimer of dimers. One homotetramer interacts with 1 SecA dimer.

Its subcellular location is the cytoplasm. Functionally, one of the proteins required for the normal export of preproteins out of the cell cytoplasm. It is a molecular chaperone that binds to a subset of precursor proteins, maintaining them in a translocation-competent state. It also specifically binds to its receptor SecA. This Bordetella petrii (strain ATCC BAA-461 / DSM 12804 / CCUG 43448) protein is Protein-export protein SecB.